Here is a 480-residue protein sequence, read N- to C-terminus: Protein nucleotidyltransferase YdiU (480 aa).

8 residues coordinate ATP: Gly-86, Gly-88, Arg-89, Lys-109, Asp-121, Gly-122, Arg-172, and Arg-179. Asp-248 acts as the Proton acceptor in catalysis. Asn-249 and Asp-258 together coordinate Mg(2+). ATP is bound at residue Asp-258.

It belongs to the SELO family. Requires Mg(2+) as cofactor. The cofactor is Mn(2+).

The enzyme catalyses L-seryl-[protein] + ATP = 3-O-(5'-adenylyl)-L-seryl-[protein] + diphosphate. It catalyses the reaction L-threonyl-[protein] + ATP = 3-O-(5'-adenylyl)-L-threonyl-[protein] + diphosphate. The catalysed reaction is L-tyrosyl-[protein] + ATP = O-(5'-adenylyl)-L-tyrosyl-[protein] + diphosphate. It carries out the reaction L-histidyl-[protein] + UTP = N(tele)-(5'-uridylyl)-L-histidyl-[protein] + diphosphate. The enzyme catalyses L-seryl-[protein] + UTP = O-(5'-uridylyl)-L-seryl-[protein] + diphosphate. It catalyses the reaction L-tyrosyl-[protein] + UTP = O-(5'-uridylyl)-L-tyrosyl-[protein] + diphosphate. Functionally, nucleotidyltransferase involved in the post-translational modification of proteins. It can catalyze the addition of adenosine monophosphate (AMP) or uridine monophosphate (UMP) to a protein, resulting in modifications known as AMPylation and UMPylation. This Salmonella paratyphi B (strain ATCC BAA-1250 / SPB7) protein is Protein nucleotidyltransferase YdiU.